We begin with the raw amino-acid sequence, 164 residues long: Large ribosomal subunit protein uL15 (164 aa).

Residues 1 to 33 show a composition bias toward basic residues; sequence MTSKKRRQRGSRTHGGGTHKNRRGAGHRGGRGR. 2 disordered regions span residues 1 to 59 and 137 to 164; these read MTSK…PGAE and AGGS…NDEN. Basic and acidic residues predominate over residues 34-43; it reads AGRDKHEQHN. Residues 153–164 show a composition bias toward acidic residues; sequence GEDEEPNSNDEN.

Belongs to the universal ribosomal protein uL15 family. As to quaternary structure, part of the 50S ribosomal subunit.

Binds to the 23S rRNA. The protein is Large ribosomal subunit protein uL15 of Haloquadratum walsbyi (strain DSM 16790 / HBSQ001).